The primary structure comprises 305 residues: Aquaporin-1 (305 aa).

The segment at 1 to 34 is disordered; that stretch reads MSSNDSNDTDKQHTRLDPTGVDDAYIPPEQPETK. Residues 1 to 48 are Cytoplasmic-facing; it reads MSSNDSNDTDKQHTRLDPTGVDDAYIPPEQPETKHHRFKISRDTLRDH. Residues 49-69 form a helical membrane-spanning segment; sequence FIAAVGEFCGTFMFLWCAYVI. Residues 70-91 lie on the Extracellular side of the membrane; that stretch reads CNVANHDVALVAAPDGSHPGQL. Residues 92-112 form a helical membrane-spanning segment; it reads IMIAIGFGFSVMFSIWCFAGV. Residues 113–136 are Cytoplasmic-facing; the sequence is SGGALNPAMSLSLCLARAVSPTRC. The short motif at 118 to 120 is the NPA 1 element; it reads NPA. Residues 137–157 form a helical membrane-spanning segment; it reads VVMWVSQIVAGMAAGGAASAM. At 158-176 the chain is on the extracellular side; sequence TPGEVLFANSLGLGCSRTR. Residues 177–197 form a helical membrane-spanning segment; it reads GLFLEMFGTAILCLTVLMTAV. Topologically, residues 198–203 are cytoplasmic; it reads EKRETN. Residues 204 to 224 form a helical membrane-spanning segment; it reads FMAALPIGISLFIAHVALTAY. Residues 225–248 lie on the Extracellular side of the membrane; the sequence is TGTGVNPARSLGAAVAARYFPHYH. An NPA 2 motif is present at residues 230–232; it reads NPA. The helical transmembrane segment at 249 to 269 threads the bilayer; it reads WIYWIGTLLGSILAWSVWQLL. At 270–305 the chain is on the cytoplasmic side; the sequence is QILDYTTYVTAEKAASTKEKAQKKGETSSSSAVAEV. The segment covering 286 to 295 has biased composition (basic and acidic residues); it reads TKEKAQKKGE. The interval 286–305 is disordered; that stretch reads TKEKAQKKGETSSSSAVAEV. A compositionally biased stretch (polar residues) spans 296–305; sequence TSSSSAVAEV.

This sequence belongs to the MIP/aquaporin (TC 1.A.8) family.

It is found in the endoplasmic reticulum membrane. The protein localises to the cell membrane. Functionally, water channel required to facilitate the transport of water across membranes. Involved in sporulation, freeze tolerance and osmotolerance. Is non-functional in most laboratory strains. The protein is Aquaporin-1 (AQY1) of Saccharomyces cerevisiae (strain ATCC 204508 / S288c) (Baker's yeast).